The following is a 371-amino-acid chain: Dual-specificity RNA methyltransferase RlmN (371 aa).

The active-site Proton acceptor is the E97. The Radical SAM core domain occupies 103 to 341 (DGDRATLCVS…VTVRTTRGDD (239 aa)). C110 and C346 are disulfide-bonded. [4Fe-4S] cluster-binding residues include C117, C121, and C124. Residues 171–172 (GE), S203, 225–227 (SLH), and N303 each bind S-adenosyl-L-methionine. C346 functions as the S-methylcysteine intermediate in the catalytic mechanism.

It belongs to the radical SAM superfamily. RlmN family. It depends on [4Fe-4S] cluster as a cofactor.

The protein resides in the cytoplasm. It catalyses the reaction adenosine(2503) in 23S rRNA + 2 reduced [2Fe-2S]-[ferredoxin] + 2 S-adenosyl-L-methionine = 2-methyladenosine(2503) in 23S rRNA + 5'-deoxyadenosine + L-methionine + 2 oxidized [2Fe-2S]-[ferredoxin] + S-adenosyl-L-homocysteine. The catalysed reaction is adenosine(37) in tRNA + 2 reduced [2Fe-2S]-[ferredoxin] + 2 S-adenosyl-L-methionine = 2-methyladenosine(37) in tRNA + 5'-deoxyadenosine + L-methionine + 2 oxidized [2Fe-2S]-[ferredoxin] + S-adenosyl-L-homocysteine. Its function is as follows. Specifically methylates position 2 of adenine 2503 in 23S rRNA and position 2 of adenine 37 in tRNAs. m2A2503 modification seems to play a crucial role in the proofreading step occurring at the peptidyl transferase center and thus would serve to optimize ribosomal fidelity. This is Dual-specificity RNA methyltransferase RlmN from Marinomonas sp. (strain MWYL1).